A 149-amino-acid chain; its full sequence is MEPEVVAAGIVKKRTFKKFSFRGVDLDALLDMSIEDLVKHFSSRIRRRFSRGLTRKPMALIKKLRKAKMEAPAGEKPASVRTHLRNMIIVPEMIGSIIGVYNGKTFNQVEIKPEMIGHYLAEFSISYKPVKHGRPGVGATNSSRFIPLK.

Belongs to the universal ribosomal protein uS19 family.

Its subcellular location is the cytoplasm. In Arabidopsis thaliana (Mouse-ear cress), this protein is Small ribosomal subunit protein uS19w (RPS15E).